The sequence spans 21 residues: Dahlein-5.2 (21 aa).

In terms of tissue distribution, expressed by the skin dorsal glands.

The protein resides in the secreted. Has no antimicrobial activity. Strongly inhibits the formation of NO by neuronal nitric oxide synthase at micromolar concentrations. The polypeptide is Dahlein-5.2 (Ranoidea dahlii (Dahl's aquatic frog)).